The following is a 245-amino-acid chain: Probable 2-phosphosulfolactate phosphatase (245 aa).

Belongs to the ComB family. It depends on Mg(2+) as a cofactor.

The enzyme catalyses (2R)-O-phospho-3-sulfolactate + H2O = (2R)-3-sulfolactate + phosphate. The sequence is that of Probable 2-phosphosulfolactate phosphatase from Synechococcus sp. (strain RCC307).